A 118-amino-acid chain; its full sequence is MRNWRWLLLVLAALLAWLQHRFWFGPGNSGEVRMLQVQIVQQHQENERLRQRNASLAAEVKNLKDGDAAIEERARSELGMIKPGEIFYRVVEDIPVPLPNDTSADHGVDLSQPRREKR.

The Cytoplasmic segment spans residues 1 to 6 (MRNWRW). Residues 7–24 (LLLVLAALLAWLQHRFWF) form a helical membrane-spanning segment. Residues 25 to 118 (GPGNSGEVRM…DLSQPRREKR (94 aa)) lie on the Periplasmic side of the membrane. The stretch at 30-66 (GEVRMLQVQIVQQHQENERLRQRNASLAAEVKNLKDG) forms a coiled coil. Positions 98–118 (LPNDTSADHGVDLSQPRREKR) are disordered. Positions 103 to 118 (SADHGVDLSQPRREKR) are enriched in basic and acidic residues.

This sequence belongs to the FtsB family. In terms of assembly, part of a complex composed of FtsB, FtsL and FtsQ.

It is found in the cell inner membrane. Its function is as follows. Essential cell division protein. May link together the upstream cell division proteins, which are predominantly cytoplasmic, with the downstream cell division proteins, which are predominantly periplasmic. This chain is Cell division protein FtsB, found in Xylella fastidiosa (strain M23).